Here is a 325-residue protein sequence, read N- to C-terminus: DNA-directed RNA polymerase subunit alpha (325 aa).

The tract at residues 1-231 is alpha N-terminal domain (alpha-NTD); sequence MQNSLLKPRI…DQLNVFAALE (231 aa). Residues 246-325 form an alpha C-terminal domain (alpha-CTD) region; sequence VDPILLRPVD…ENWPPAGLEK (80 aa).

Belongs to the RNA polymerase alpha chain family. Homodimer. The RNAP catalytic core consists of 2 alpha, 1 beta, 1 beta' and 1 omega subunit. When a sigma factor is associated with the core the holoenzyme is formed, which can initiate transcription.

It carries out the reaction RNA(n) + a ribonucleoside 5'-triphosphate = RNA(n+1) + diphosphate. Functionally, DNA-dependent RNA polymerase catalyzes the transcription of DNA into RNA using the four ribonucleoside triphosphates as substrates. The chain is DNA-directed RNA polymerase subunit alpha from Herminiimonas arsenicoxydans.